Here is a 217-residue protein sequence, read N- to C-terminus: Ranaspumin (217 aa).

4 disulfide bridges follow: cysteine 18–cysteine 67, cysteine 38–cysteine 114, cysteine 125–cysteine 168, and cysteine 146–cysteine 207.

As to quaternary structure, monomer. Exclusively expressed in females in the early oviduct, the glandular part of the oviduct (pars convoluta dilata) and in the cloaca.

It is found in the secreted. Acts as a surfactant. Is the major protein constituent (45%) of foam nests. Has no antimicrobial activity, no larvicidal activity, and is not toxic to mice. The protein is Ranaspumin of Leptodactylus vastus (Northeastern pepper frog).